A 193-amino-acid chain; its full sequence is Peptidyl-tRNA hydrolase (193 aa).

Tyr-18 contacts tRNA. Residue His-23 is the Proton acceptor of the active site. Residues Phe-69, Asn-71, and Asn-117 each coordinate tRNA.

It belongs to the PTH family. In terms of assembly, monomer.

Its subcellular location is the cytoplasm. It carries out the reaction an N-acyl-L-alpha-aminoacyl-tRNA + H2O = an N-acyl-L-amino acid + a tRNA + H(+). In terms of biological role, hydrolyzes ribosome-free peptidyl-tRNAs (with 1 or more amino acids incorporated), which drop off the ribosome during protein synthesis, or as a result of ribosome stalling. Its function is as follows. Catalyzes the release of premature peptidyl moieties from peptidyl-tRNA molecules trapped in stalled 50S ribosomal subunits, and thus maintains levels of free tRNAs and 50S ribosomes. This Teredinibacter turnerae (strain ATCC 39867 / T7901) protein is Peptidyl-tRNA hydrolase.